Here is a 236-residue protein sequence, read N- to C-terminus: Cell division protein FtsQ (236 aa).

The Cytoplasmic segment spans residues 1 to 14 (MWDNHQALNQVADW). A helical transmembrane segment spans residues 15-37 (LFTLAGLTTIYLMVQWTIHLPLL). Residues 37–111 (LPLKEVHIRS…NGLDVVVEEH (75 aa)) form the POTRA domain. Residues 38–236 (PLKEVHIRSN…VSGFAARGTR (199 aa)) are Periplasmic-facing.

The protein belongs to the FtsQ/DivIB family. FtsQ subfamily. As to quaternary structure, part of a complex composed of FtsB, FtsL and FtsQ.

It localises to the cell inner membrane. Its function is as follows. Essential cell division protein. May link together the upstream cell division proteins, which are predominantly cytoplasmic, with the downstream cell division proteins, which are predominantly periplasmic. May control correct divisome assembly. The chain is Cell division protein FtsQ from Nitrosospira multiformis (strain ATCC 25196 / NCIMB 11849 / C 71).